The primary structure comprises 304 residues: Insulin-like growth factor 1 receptor (304 aa).

2 consecutive Fibronectin type-III domains span residues 1-43 and 49-142; these read ERTV…TMPA and IPGP…VQAK. Residues 1-147 are Extracellular-facing; it reads ERTVISNLRP…YVQAKTTYEN (147 aa). 2 N-linked (GlcNAc...) asparagine glycosylation sites follow: Asn-115 and Asn-128. A helical transmembrane segment spans residues 148–168; that stretch reads FIHLIIALPVAVLLIVGGLVI. Topologically, residues 169 to 304 are cytoplasmic; the sequence is MLYVFHRKRN…HMNGGRKNER (136 aa). Phosphoserine; by GSK3-beta is present on Ser-225. At Ser-229 the chain carries Phosphoserine. Positions 231–304 are disordered; that stretch reads ENKPPEPEEL…HMNGGRKNER (74 aa). Over residues 237-246 the composition is skewed to acidic residues; sequence PEELDLEPEN. The segment covering 247 to 263 has biased composition (low complexity); it reads MESVPLDPSASSSSLPL. Over residues 264 to 273 the composition is skewed to basic and acidic residues; it reads PDRHSGHKAE.

The protein belongs to the protein kinase superfamily. Tyr protein kinase family. Insulin receptor subfamily. As to quaternary structure, tetramer of 2 alpha and 2 beta chains linked by disulfide bonds. The alpha chains contribute to the formation of the ligand-binding domain, while the beta chain carries the kinase domain. Forms a hybrid receptor with INSR, the hybrid is a tetramer consisting of 1 alpha chain and 1 beta chain of INSR and 1 alpha chain and 1 beta chain of IGF1R. Interacts with ARRB1 and ARRB2. Interacts with GRB10. Interacts with RACK1. Interacts with SOCS1, SOCS2 and SOCS3. Interacts with 14-3-3 proteins. Interacts with NMD2. Interacts with MAP3K5. Interacts with STAT3. Found in a ternary complex with IGF1 and ITGAV:ITGB3 or ITGA6:ITGB4. Interacts (nascent precursor form) with ZFAND2B. Autophosphorylated on tyrosine residues in response to ligand binding. Autophosphorylation occurs in trans, i.e. one subunit of the dimeric receptor phosphorylates tyrosine residues on the other subunit. Autophosphorylation occurs in a sequential manner. While every single phosphorylation increases kinase activity, all three tyrosine residues in the kinase activation loop have to be phosphorylated for optimal activity. Can be autophosphorylated at additional tyrosine residues (in vitro). May also be phosphorylated at tyrosine residues by mTORC2. Autophosphorylated is followed by phosphorylation of juxtamembrane tyrosines and C-terminal serines. Phosphorylation of Ser-225 by GSK-3beta restrains kinase activity and promotes cell surface expression, it requires a priming phosphorylation at Ser-229. Dephosphorylated by PTPN1. Post-translationally, polyubiquitinated in the activation loop through both 'Lys-48' and 'Lys-29' linkages, promoting receptor endocytosis and subsequent degradation by the proteasome. Ubiquitination is facilitated by pre-existing phosphorylation. In terms of processing, sumoylated with SUMO1. Controlled by regulated intramembrane proteolysis (RIP). Undergoes metalloprotease-dependent constitutive ectodomain shedding to produce a membrane-anchored 52 kDa C-Terminal fragment which is further processed by presenilin gamma-secretase to yield an intracellular 50 kDa fragment.

The protein resides in the cell membrane. It catalyses the reaction L-tyrosyl-[protein] + ATP = O-phospho-L-tyrosyl-[protein] + ADP + H(+). Its activity is regulated as follows. Activated by autophosphorylation at tyrosines in the kinase activation loop; phosphorylation at all three tyrosine residues is required for optimal kinase activity. Inhibited by MSC1609119A-1, BMS-754807, PQIP, benzimidazole pyridinone, isoquinolinedione, bis-azaindole, 3-cyanoquinoline, 2,4-bis-arylamino-1,3-pyrimidine, pyrrolopyrimidine, pyrrole-5-carboxaldehyde, picropodophyllin (PPP), tyrphostin derivatives. While most inhibitors bind to the ATP binding pocket, MSC1609119A-1 functions as allosteric inhibitor and binds close to the DFG motif and the activation loop. In terms of biological role, receptor tyrosine kinase which mediates actions of insulin-like growth factor 1 (IGF1). Binds IGF1 with high affinity and IGF2 and insulin (INS) with a lower affinity. The activated IGF1R is involved in cell growth and survival control. IGF1R is crucial for tumor transformation and survival of malignant cell. Ligand binding activates the receptor kinase, leading to receptor autophosphorylation, and tyrosines phosphorylation of multiple substrates, that function as signaling adapter proteins including, the insulin-receptor substrates (IRS1/2), Shc and 14-3-3 proteins. Phosphorylation of IRSs proteins lead to the activation of two main signaling pathways: the PI3K-AKT/PKB pathway and the Ras-MAPK pathway. The result of activating the MAPK pathway is increased cellular proliferation, whereas activating the PI3K pathway inhibits apoptosis and stimulates protein synthesis. Phosphorylated IRS1 can activate the 85 kDa regulatory subunit of PI3K (PIK3R1), leading to activation of several downstream substrates, including protein AKT/PKB. AKT phosphorylation, in turn, enhances protein synthesis through mTOR activation and triggers the antiapoptotic effects of IGFIR through phosphorylation and inactivation of BAD. In parallel to PI3K-driven signaling, recruitment of Grb2/SOS by phosphorylated IRS1 or Shc leads to recruitment of Ras and activation of the ras-MAPK pathway. In addition to these two main signaling pathways IGF1R signals also through the Janus kinase/signal transducer and activator of transcription pathway (JAK/STAT). Phosphorylation of JAK proteins can lead to phosphorylation/activation of signal transducers and activators of transcription (STAT) proteins. In particular activation of STAT3, may be essential for the transforming activity of IGF1R. The JAK/STAT pathway activates gene transcription and may be responsible for the transforming activity. JNK kinases can also be activated by the IGF1R. IGF1 exerts inhibiting activities on JNK activation via phosphorylation and inhibition of MAP3K5/ASK1, which is able to directly associate with the IGF1R. When present in a hybrid receptor with INSR, binds IGF1. The polypeptide is Insulin-like growth factor 1 receptor (IGF1R) (Sus scrofa (Pig)).